We begin with the raw amino-acid sequence, 468 residues long: MFAKLQRIHFVGIGGIGMSGIAEVLLNLGYKVSGSDLKPSAVTERLESLGAKVFEGHRASNVEGAEVVVTSSAIDSRNPEVAEAHANHIPVIQRAEMLAELMRLKYGIAIAGMHGKTTTTSMVAAVLAGGELDPTVIVGGRVDAMGSNARLGKSHYLVAEADESDRSFLKLWFIHAVVTNIDREHMDTYHDMEDVERTFVEFMDRVPFYGMVVACNDNEPLRAILPRVRRRIVTYGTTEGSDFLIRCVPCDSEQLLLGFLNRFSVEYRGKSLGEFLLRVPGLHNVRNATAAIAIGVGLDIPADKIRAALAEFRGVDRRFQLKGKANDISVIDDYGHHPTEIRATLAAAKQCGFRHIHVVFQPHRYTRTRDLMDEFASSFGDADSLYLLDIYPASEQPIEGVNTEALARRITEVSGRATFYAKSFQVAAIMAATAAEPGDMILTLGAGNVSQLGPQILERLSAKKVAAE.

112 to 118 (GMHGKTT) contacts ATP.

This sequence belongs to the MurCDEF family.

The protein resides in the cytoplasm. It catalyses the reaction UDP-N-acetyl-alpha-D-muramate + L-alanine + ATP = UDP-N-acetyl-alpha-D-muramoyl-L-alanine + ADP + phosphate + H(+). It functions in the pathway cell wall biogenesis; peptidoglycan biosynthesis. Its function is as follows. Cell wall formation. In Koribacter versatilis (strain Ellin345), this protein is UDP-N-acetylmuramate--L-alanine ligase.